The chain runs to 457 residues: Argininosuccinate lyase (457 aa).

Belongs to the lyase 1 family. Argininosuccinate lyase subfamily.

Its subcellular location is the cytoplasm. It carries out the reaction 2-(N(omega)-L-arginino)succinate = fumarate + L-arginine. It functions in the pathway amino-acid biosynthesis; L-arginine biosynthesis; L-arginine from L-ornithine and carbamoyl phosphate: step 3/3. The sequence is that of Argininosuccinate lyase from Escherichia coli O9:H4 (strain HS).